A 459-amino-acid chain; its full sequence is Peptidyl-prolyl cis-trans isomerase FKBP4 (459 aa).

Methionine 1 carries the N-acetylmethionine; in peptidyl-prolyl cis-trans isomerase FKBP4; alternate modification. Residues 1-22 (MTAEETKAAESGAQSAPLRLEG) are disordered. Threonine 2 is modified (N-acetylthreonine; in peptidyl-prolyl cis-trans isomerase FKBP4, N-terminally processed; partial). Residues 50–138 (GDRVFVHYTG…VFEVELFEFK (89 aa)) form the PPIase FKBP-type 1 domain. Position 143 is a phosphothreonine (threonine 143). The PPIase FKBP-type 2 domain maps to 167–253 (GALVEVALEG…KYEIHLKSFE (87 aa)). A Phosphotyrosine modification is found at tyrosine 220. The segment at 267 to 400 (LEQSTIVKER…AQLVVCQQRI (134 aa)) is interaction with tubulin. 3 TPR repeats span residues 270–303 (STIV…LEYE), 319–352 (LASH…DSNN), and 354–386 (KGLF…YPSN). Residue lysine 282 is modified to N6-acetyllysine. At arginine 373 the chain carries Omega-N-methylarginine. Residues 423 to 459 (TKAKATVAAGDQPADAEMRDEPKNDVAGGQPQVEAEA) form a disordered region.

In terms of assembly, homodimer. Interacts with GLMN. Associates with HSP90AA1 and HSP70 in steroid hormone receptor complexes. Also interacts with peroxisomal phytanoyl-CoA alpha-hydroxylase (PHYH). Interacts with NR3C1 and dynein. Interacts with HSF1 in the HSP90 complex. Associates with tubulin. Interacts with MAPT/TAU. Interacts (via TPR domain) with S100A1, S100A2 and S100A6; the interaction is Ca(2+) dependent. Interaction with S100A1 and S100A2 (but not with S100A6) leads to inhibition of FKBP4-HSP90 interaction. Interacts with dynein; causes partially NR3C1 transport to the nucleus.

The protein localises to the cytoplasm. It is found in the cytosol. It localises to the mitochondrion. Its subcellular location is the nucleus. The protein resides in the cytoskeleton. It catalyses the reaction [protein]-peptidylproline (omega=180) = [protein]-peptidylproline (omega=0). With respect to regulation, inhibited by FK506. In terms of biological role, immunophilin protein with PPIase and co-chaperone activities. Component of unligated steroid receptors heterocomplexes through interaction with heat-shock protein 90 (HSP90). May play a role in the intracellular trafficking of heterooligomeric forms of steroid hormone receptors between cytoplasm and nuclear compartments. The isomerase activity controls neuronal growth cones via regulation of TRPC1 channel opening. Also acts as a regulator of microtubule dynamics by inhibiting MAPT/TAU ability to promote microtubule assembly. May have a protective role against oxidative stress in mitochondria. This chain is Peptidyl-prolyl cis-trans isomerase FKBP4 (FKBP4), found in Bos taurus (Bovine).